A 792-amino-acid polypeptide reads, in one-letter code: LPS-assembly protein LptD (792 aa).

The first 22 residues, 1–22 (MYRVLRLLPLPLSVAISLSALA), serve as a signal peptide directing secretion.

This sequence belongs to the LptD family. In terms of assembly, component of the lipopolysaccharide transport and assembly complex. Interacts with LptE and LptA.

The protein resides in the cell outer membrane. Together with LptE, is involved in the assembly of lipopolysaccharide (LPS) at the surface of the outer membrane. This Xylella fastidiosa (strain 9a5c) protein is LPS-assembly protein LptD.